A 181-amino-acid polypeptide reads, in one-letter code: Large ribosomal subunit protein uL5 (181 aa).

Belongs to the universal ribosomal protein uL5 family. In terms of assembly, part of the 50S ribosomal subunit; part of the 5S rRNA/L5/L18/L25 subcomplex. Contacts the 5S rRNA and the P site tRNA. Forms a bridge to the 30S subunit in the 70S ribosome.

In terms of biological role, this is one of the proteins that bind and probably mediate the attachment of the 5S RNA into the large ribosomal subunit, where it forms part of the central protuberance. In the 70S ribosome it contacts protein S13 of the 30S subunit (bridge B1b), connecting the 2 subunits; this bridge is implicated in subunit movement. Contacts the P site tRNA; the 5S rRNA and some of its associated proteins might help stabilize positioning of ribosome-bound tRNAs. This is Large ribosomal subunit protein uL5 from Desulforamulus reducens (strain ATCC BAA-1160 / DSM 100696 / MI-1) (Desulfotomaculum reducens).